Consider the following 269-residue polypeptide: Undecaprenyl-diphosphatase (269 aa).

8 helical membrane passes run 1–21, 40–59, 87–107, 117–137, 147–166, 188–208, 220–240, and 248–268; these read MDIM…ILPI, GLTF…CVYF, FFII…EKPI, LIAL…TTGP, LRGA…PGVS, FSFL…MGEL, PLLA…ALLL, and LYPF…YLFA.

It belongs to the UppP family.

Its subcellular location is the cell inner membrane. The enzyme catalyses di-trans,octa-cis-undecaprenyl diphosphate + H2O = di-trans,octa-cis-undecaprenyl phosphate + phosphate + H(+). Its function is as follows. Catalyzes the dephosphorylation of undecaprenyl diphosphate (UPP). Confers resistance to bacitracin. This chain is Undecaprenyl-diphosphatase, found in Geobacter sulfurreducens (strain ATCC 51573 / DSM 12127 / PCA).